We begin with the raw amino-acid sequence, 486 residues long: Glutamyl-tRNA(Gln) amidotransferase subunit A (486 aa).

Residues Lys74 and Ser149 each act as charge relay system in the active site. The active-site Acyl-ester intermediate is Ser173.

This sequence belongs to the amidase family. GatA subfamily. As to quaternary structure, heterotrimer of A, B and C subunits.

The catalysed reaction is L-glutamyl-tRNA(Gln) + L-glutamine + ATP + H2O = L-glutaminyl-tRNA(Gln) + L-glutamate + ADP + phosphate + H(+). Functionally, allows the formation of correctly charged Gln-tRNA(Gln) through the transamidation of misacylated Glu-tRNA(Gln) in organisms which lack glutaminyl-tRNA synthetase. The reaction takes place in the presence of glutamine and ATP through an activated gamma-phospho-Glu-tRNA(Gln). In Prochlorococcus marinus (strain MIT 9303), this protein is Glutamyl-tRNA(Gln) amidotransferase subunit A.